A 651-amino-acid chain; its full sequence is Transcription termination factor FttA (651 aa).

Residues 1-200 (MTFLIKRETQ…ITGLGGFREV (200 aa)) form an archaeal CPSF-KH domain region. Residues 12–79 (DQILRDIRAV…ISVRPDPEVL (68 aa)) are KHa. The tract at residues 80–147 (LPPEEAEKLI…WAPKVVRTPP (68 aa)) is KHb. The metallo-beta-lactamase N-terminus stretch occupies residues 188-398 (WIRITGLGGF…LVMESTYGGA (211 aa)). His256, His258, Asp260, His261, His344, and Asp367 together coordinate Zn(2+). Positions 399-592 (NDIQMPREEA…MEVHTIDGFS (194 aa)) are beta-Casp. The interval 593–651 (GHADRRELMNYVAKVRPRPERIITVHGEPQKCLDLATSIHRKFGISTRAPNNLDTIRLR) is metallo-beta-lactamase C-terminus. His618 lines the Zn(2+) pocket.

This sequence belongs to the metallo-beta-lactamase superfamily. RNA-metabolizing metallo-beta-lactamase-like family. FttA subfamily. As to quaternary structure, homodimer. Interacts with RNA polymerase (RNAP), interacts with the Spt4-Spt5 complex. The cofactor is Zn(2+).

Functionally, terminates transcription on the whole genome. Termination is linked to FttA-mediated RNA cleavage and does not require NTP hydrolysis. Cleaves endonucleolytically at the RNA exit channel of RNA polymerase (RNAP); the 5'-3' exonuclease activity of this protein degrades the nascent RNA released from RNAP. In terms of biological role, has nuclease activity on single-stranded RNA. The chain is Transcription termination factor FttA from Pyrococcus horikoshii (strain ATCC 700860 / DSM 12428 / JCM 9974 / NBRC 100139 / OT-3).